A 251-amino-acid chain; its full sequence is Probable aquaporin TIP4-1 (251 aa).

2 consecutive transmembrane segments (helical) span residues 26 to 46 (LVLTFVFVFTGVAATMAAGVP) and 57 to 77 (ALAGVAIATALAAGVLVTAGF). Residues 85–87 (NPA) carry the NPA 1 motif. 3 consecutive transmembrane segments (helical) span residues 104 to 124 (ALYVAAQLLASSLACILLRYL), 144 to 164 (GLVMEIILTFSLLFVVYATIL), and 170 to 190 (VPGFGPLLTGLIVGANTIAGG). Residues 198-200 (NPA) carry the NPA 2 motif. The chain crosses the membrane as a helical span at residues 219-239 (WLGPLIGGPLAGLVYESLFLV).

The protein belongs to the MIP/aquaporin (TC 1.A.8) family. TIP (TC 1.A.8.10) subfamily. Expressed in roots, leaves and anthers.

The protein localises to the vacuole membrane. Aquaporins facilitate the transport of water and small neutral solutes across cell membranes. May be involved in transport from the vacuolar compartment to the cytoplasm. The protein is Probable aquaporin TIP4-1 (TIP4-1) of Oryza sativa subsp. japonica (Rice).